Reading from the N-terminus, the 343-residue chain is CRISPR-associated endonuclease Cas1 1 (343 aa).

Mn(2+) contacts are provided by E166, H234, and E249.

Belongs to the CRISPR-associated endonuclease Cas1 family. As to quaternary structure, homodimer, forms a heterotetramer with a Cas2 homodimer. It depends on Mg(2+) as a cofactor. Mn(2+) is required as a cofactor.

CRISPR (clustered regularly interspaced short palindromic repeat), is an adaptive immune system that provides protection against mobile genetic elements (viruses, transposable elements and conjugative plasmids). CRISPR clusters contain spacers, sequences complementary to antecedent mobile elements, and target invading nucleic acids. CRISPR clusters are transcribed and processed into CRISPR RNA (crRNA). Acts as a dsDNA endonuclease. Involved in the integration of spacer DNA into the CRISPR cassette. This is CRISPR-associated endonuclease Cas1 1 from Chlorobaculum tepidum (strain ATCC 49652 / DSM 12025 / NBRC 103806 / TLS) (Chlorobium tepidum).